A 711-amino-acid chain; its full sequence is RB-associated KRAB zinc finger protein (711 aa).

The 72-residue stretch at 8–79 (LSFKDVAVAF…EGDRHAQRHL (72 aa)) folds into the KRAB domain. Residues Lys-97 and Lys-256 each participate in a glycyl lysine isopeptide (Lys-Gly) (interchain with G-Cter in SUMO2) cross-link. The interval 170–257 (AYGESLEDFN…YPRSQMELKP (88 aa)) is required for interaction with RB1. 2 C2H2-type zinc fingers span residues 258-280 (FECT…QRAH) and 286-308 (YACS…RRSH). Lys-312 participates in a covalent cross-link: Glycyl lysine isopeptide (Lys-Gly) (interchain with G-Cter in SUMO2). 6 consecutive C2H2-type zinc fingers follow at residues 314–336 (YKCN…QRTH), 342–364 (YECS…QRNH), 370–392 (YPCN…QRTH), 398–420 (YKCN…QRTH), 426–448 (YQCS…YRSH), and 454–476 (YECT…WKVH). Lys-354 participates in a covalent cross-link: Glycyl lysine isopeptide (Lys-Gly) (interchain with G-Cter in SUMO2). Residues 414–711 (ITHQRTHTGE…TVNVLTVEKL (298 aa)) are interaction with AR. The segment at 508–530 (YECNECGKTFLDSSAFHRHQSVP) adopts a C2H2-type 9; degenerate zinc-finger fold. A Glycyl lysine isopeptide (Lys-Gly) (interchain with G-Cter in SUMO2) cross-link involves residue Lys-534. 6 consecutive C2H2-type zinc fingers follow at residues 536–558 (YECN…YRGH), 564–586 (FGCS…QRVH), 592–614 (YECY…HRIH), 620–642 (YECS…YRSH), 648–670 (YECN…YRTH), and 676–698 (YECN…QRIH).

It belongs to the krueppel C2H2-type zinc-finger protein family. Interacts with AR. May also interact with other nuclear hormone receptors such as NR3C1/GR. Interacts with RB1.

It localises to the nucleus. In terms of biological role, may repress E2F-dependent transcription. May promote AR-dependent transcription. The sequence is that of RB-associated KRAB zinc finger protein (Rbak) from Mus musculus (Mouse).